The following is a 432-amino-acid chain: Glutamate-1-semialdehyde 2,1-aminomutase 2 (432 aa).

K268 is modified (N6-(pyridoxal phosphate)lysine).

Belongs to the class-III pyridoxal-phosphate-dependent aminotransferase family. HemL subfamily. As to quaternary structure, homodimer. Pyridoxal 5'-phosphate serves as cofactor.

The protein localises to the cytoplasm. It carries out the reaction (S)-4-amino-5-oxopentanoate = 5-aminolevulinate. Its pathway is porphyrin-containing compound metabolism; protoporphyrin-IX biosynthesis; 5-aminolevulinate from L-glutamyl-tRNA(Glu): step 2/2. The chain is Glutamate-1-semialdehyde 2,1-aminomutase 2 from Listeria monocytogenes serotype 4b (strain F2365).